Consider the following 315-residue polypeptide: Small ribosomal subunit protein uS2 (315 aa).

Residues 241-315 (AQHGEERRPG…QPAPGSDANR (75 aa)) form a disordered region. The span at 243–288 (HGEERRPGEEDRDAASERGQKDRRDRRDRRGGGRDRERREPREDRA) shows a compositional bias: basic and acidic residues.

This sequence belongs to the universal ribosomal protein uS2 family.

This Anaeromyxobacter sp. (strain Fw109-5) protein is Small ribosomal subunit protein uS2.